The sequence spans 90 residues: Small ribosomal subunit protein bS18 (90 aa).

This sequence belongs to the bacterial ribosomal protein bS18 family. As to quaternary structure, part of the 30S ribosomal subunit. Forms a tight heterodimer with protein bS6.

Functionally, binds as a heterodimer with protein bS6 to the central domain of the 16S rRNA, where it helps stabilize the platform of the 30S subunit. This chain is Small ribosomal subunit protein bS18, found in Bordetella petrii (strain ATCC BAA-461 / DSM 12804 / CCUG 43448).